Here is an 864-residue protein sequence, read N- to C-terminus: Alanine--tRNA ligase (864 aa).

Zn(2+)-binding residues include His534, His538, Cys639, and His643.

Belongs to the class-II aminoacyl-tRNA synthetase family. Requires Zn(2+) as cofactor.

The protein resides in the cytoplasm. The enzyme catalyses tRNA(Ala) + L-alanine + ATP = L-alanyl-tRNA(Ala) + AMP + diphosphate. Functionally, catalyzes the attachment of alanine to tRNA(Ala) in a two-step reaction: alanine is first activated by ATP to form Ala-AMP and then transferred to the acceptor end of tRNA(Ala). Also edits incorrectly charged Ser-tRNA(Ala) and Gly-tRNA(Ala) via its editing domain. The polypeptide is Alanine--tRNA ligase (Onion yellows phytoplasma (strain OY-M)).